Here is a 328-residue protein sequence, read N- to C-terminus: dTDP-glucose 4,6-dehydratase (328 aa).

NAD(+)-binding positions include phenylalanine 13 to isoleucine 14, aspartate 37 to threonine 40, aspartate 63 to isoleucine 64, leucine 82 to serine 86, and threonine 101. Serine 86 lines the substrate pocket. Threonine 126 lines the substrate pocket. The Proton donor role is filled by aspartate 127. Residues glutamate 128 and tyrosine 150 each act as proton acceptor in the active site. Position 150–154 (tyrosine 150–lysine 154) interacts with NAD(+). Position 179 (asparagine 179) interacts with substrate. Residue asparagine 180 coordinates NAD(+). Residues lysine 189–leucine 190, proline 205–tyrosine 207, arginine 214, asparagine 249, and aspartate 272–histidine 276 each bind substrate.

This sequence belongs to the NAD(P)-dependent epimerase/dehydratase family. dTDP-glucose dehydratase subfamily. In terms of assembly, homodimer. Requires NAD(+) as cofactor.

It catalyses the reaction dTDP-alpha-D-glucose = dTDP-4-dehydro-6-deoxy-alpha-D-glucose + H2O. It participates in antibiotic biosynthesis; streptomycin biosynthesis. Functionally, involved in the biosynthesis of the streptose moiety of streptomycin. Catalyzes the dehydration of dTDP-D-glucose to form dTDP-6-deoxy-D-xylo-4-hexulose via a three-step process involving oxidation, dehydration and reduction. The protein is dTDP-glucose 4,6-dehydratase of Streptomyces griseus.